Consider the following 1113-residue polypeptide: Carbamoyl phosphate synthase arginine-specific large chain (1113 aa).

A carboxyphosphate synthetic domain region spans residues 23–420 (QLIKGIDSVL…AFQKAFRQVD (398 aa)). Residues R150, R190, G196, G197, K227, L229, E234, G260, I261, H262, Q303, and E317 each coordinate ATP. The ATP-grasp 1 domain maps to 154-346 (ARALKEINMP…LAYTAAKIAL (193 aa)). Mg(2+) is bound by residues Q303, E317, and N319. Positions 303, 317, and 319 each coordinate Mn(2+). The oligomerization domain stretch occupies residues 421–568 (PSLLGFQGSD…YVTYNAVKDD (148 aa)). Positions 569-955 (VTFGDNGIMV…SYWVALQGLM (387 aa)) are carbamoyl phosphate synthetic domain. One can recognise an ATP-grasp 2 domain in the interval 693 to 888 (STILDTLGLD…FVEIAVKAFL (196 aa)). Residues R729, K768, I770, E775, G800, V801, H802, S803, Q843, and E859 each coordinate ATP. The Mg(2+) site is built by Q843, E859, and N861. Q843, E859, and N861 together coordinate Mn(2+). Residues 956-1097 (SFCVPLPPSG…EMRQSDGPET (142 aa)) form an allosteric domain region. Positions 957–1113 (FCVPLPPSGI…WREYLGFKPT (157 aa)) constitute an MGS-like domain.

It belongs to the CarB family. In terms of assembly, heterodimer composed of 2 chains; the small (or glutamine) chain promotes the hydrolysis of glutamine to ammonia, which is used by the large (or ammonia) chain to synthesize carbamoyl phosphate. Mg(2+) serves as cofactor. The cofactor is Mn(2+).

The protein localises to the cytoplasm. The catalysed reaction is hydrogencarbonate + L-glutamine + 2 ATP + H2O = carbamoyl phosphate + L-glutamate + 2 ADP + phosphate + 2 H(+). It catalyses the reaction hydrogencarbonate + NH4(+) + 2 ATP = carbamoyl phosphate + 2 ADP + phosphate + 2 H(+). The protein operates within amino-acid biosynthesis; L-arginine biosynthesis; carbamoyl phosphate from bicarbonate: step 1/1. In terms of biological role, large subunit of the arginine-specific carbamoyl phosphate synthase (CPSase). CPSase catalyzes the formation of carbamoyl phosphate from the ammonia moiety of glutamine, hydrogencarbonate, and phosphate donated by ATP, constituting the first step of 2 biosynthetic pathways, one leading to arginine and/or urea and the other to pyrimidine nucleotides. The large subunit (synthetase) binds the substrates ammonia (free or transferred from glutamine from the small subunit), hydrogencarbonate and ATP and carries out an ATP-coupled ligase reaction, activating hydrogencarbonate by forming carboxy phosphate which reacts with ammonia to form carbamoyl phosphate. The protein is Carbamoyl phosphate synthase arginine-specific large chain (CPA2) of Eremothecium gossypii (strain ATCC 10895 / CBS 109.51 / FGSC 9923 / NRRL Y-1056) (Yeast).